The sequence spans 183 residues: Adenine phosphoribosyltransferase (183 aa).

It belongs to the purine/pyrimidine phosphoribosyltransferase family. In terms of assembly, homodimer.

The protein localises to the cytoplasm. It carries out the reaction AMP + diphosphate = 5-phospho-alpha-D-ribose 1-diphosphate + adenine. It participates in purine metabolism; AMP biosynthesis via salvage pathway; AMP from adenine: step 1/1. Its function is as follows. Catalyzes a salvage reaction resulting in the formation of AMP, that is energically less costly than de novo synthesis. This is Adenine phosphoribosyltransferase from Shewanella pealeana (strain ATCC 700345 / ANG-SQ1).